Here is a 245-residue protein sequence, read N- to C-terminus: 1-(5-phosphoribosyl)-5-[(5-phosphoribosylamino)methylideneamino] imidazole-4-carboxamide isomerase (245 aa).

The Proton acceptor role is filled by aspartate 8. Aspartate 130 serves as the catalytic Proton donor.

The protein belongs to the HisA/HisF family.

The protein localises to the cytoplasm. It catalyses the reaction 1-(5-phospho-beta-D-ribosyl)-5-[(5-phospho-beta-D-ribosylamino)methylideneamino]imidazole-4-carboxamide = 5-[(5-phospho-1-deoxy-D-ribulos-1-ylimino)methylamino]-1-(5-phospho-beta-D-ribosyl)imidazole-4-carboxamide. It participates in amino-acid biosynthesis; L-histidine biosynthesis; L-histidine from 5-phospho-alpha-D-ribose 1-diphosphate: step 4/9. The sequence is that of 1-(5-phosphoribosyl)-5-[(5-phosphoribosylamino)methylideneamino] imidazole-4-carboxamide isomerase from Pseudomonas fluorescens (strain ATCC BAA-477 / NRRL B-23932 / Pf-5).